The sequence spans 469 residues: Zinc transporter SLC39A7 (469 aa).

The chain crosses the membrane as a helical span at residues 10–30 (WVAVGLLTWATLGLLVAGLGG). Basic and acidic residues-rich tracts occupy residues 42–56 (FHGH…DFHH) and 66–114 (HTHE…EHSH). Residues 42–121 (FHGHSHRHSH…HSHGGYGESG (80 aa)) are disordered. Pros-methylhistidine is present on H66. The next 3 membrane-spanning stretches (helical) occupy residues 138-158 (ALGA…LIPV), 169-189 (LQIL…LHLI), and 214-234 (GPIL…LVVE). Over residues 242 to 263 (GGHGHSHGHGHAHSHTRGSHGH) the composition is skewed to basic residues. The disordered stretch occupies residues 242-310 (GGHGHSHGHG…VRPQNAEEEK (69 aa)). The span at 264 to 285 (GRQERSTKEKQSSEEEEKETRG) shows a compositional bias: basic and acidic residues. S275 and S276 each carry phosphoserine; by CK2. 2 consecutive transmembrane segments (helical) span residues 381-401 (MRLQ…ALLT) and 417-436 (GWVL…VSVL).

The protein belongs to the ZIP transporter (TC 2.A.5) family. KE4/Catsup subfamily. In terms of assembly, homodimer. Post-translationally, rapidly phosphorylated by CK2 following Zn(2+) treatment. This phosphorylation is required for efficient cytosolic Zn(2+) release. In terms of processing, methylation at some His residue by METTL9 leads to reduced zinc-binding. As to expression, widely expressed.

It is found in the endoplasmic reticulum membrane. The protein resides in the golgi apparatus. It localises to the cis-Golgi network membrane. It carries out the reaction Zn(2+)(in) = Zn(2+)(out). With respect to regulation, phosphorylation activates zinc transport activity. Its function is as follows. Transports Zn(2+) from the endoplasmic reticulum (ER)/Golgi apparatus to the cytosol, playing an essential role in the regulation of cytosolic zinc levels. Acts as a gatekeeper of zinc release from intracellular stores, requiring post-translational activation by phosphorylation, resulting in activation of multiple downstream pathways leading to cell growth and proliferation. Has an essential role in B cell development and is required for proper B cell receptor signaling. Plays an important role in maintaining intestinal epithelial homeostasis and skin dermis development by regulating ER function. Controls cell signaling pathways involved in glucose metabolism in skeletal muscle. Has a protective role against ER stress in different biological contexts. Mediates Zn(2+)-induced ferroptosis. In Homo sapiens (Human), this protein is Zinc transporter SLC39A7 (SLC39A7).